The following is a 278-amino-acid chain: Probable malate dehydrogenase (278 aa).

Positions 51 and 57 each coordinate substrate. NAD(+)-binding positions include asparagine 64 and 87 to 89 (VSN). The substrate site is built by asparagine 89 and arginine 120. Histidine 144 serves as the catalytic Proton acceptor.

Belongs to the LDH/MDH superfamily.

The enzyme catalyses (S)-malate + NAD(+) = oxaloacetate + NADH + H(+). Its function is as follows. Catalyzes the reversible oxidation of malate to oxaloacetate. In Pseudomonas putida (strain ATCC 47054 / DSM 6125 / CFBP 8728 / NCIMB 11950 / KT2440), this protein is Probable malate dehydrogenase (mdh).